A 1098-amino-acid chain; its full sequence is Probable arabinosyltransferase B (1098 aa).

The next 12 helical transmembrane spans lie at 28 to 50, 217 to 239, 271 to 293, 402 to 419, 434 to 456, 472 to 494, 541 to 558, 570 to 587, 597 to 619, 626 to 648, 663 to 685, and 698 to 720; these read WVAT…LPVV, LKLL…LWRL, ASWR…WHVI, LRPE…YVLI, AVVT…AALV, LVGT…TVVF, FGFL…FIML, PAWR…FLMF, GLFA…PSVL, MAFL…GWWY, IDGI…YAAW, and LIRA…VFVA.

The protein belongs to the emb family.

The protein resides in the cell membrane. Arabinosyl transferase responsible for the polymerization of arabinose into the arabinan of arabinogalactan. The protein is Probable arabinosyltransferase B (embB) of Mycobacterium tuberculosis (strain CDC 1551 / Oshkosh).